Here is a 585-residue protein sequence, read N- to C-terminus: Lipoprotein LpqB (585 aa).

The N-terminal stretch at 1-17 (MGRKLLGLLMLAVLLAG) is a signal peptide. The N-palmitoyl cysteine moiety is linked to residue C18. C18 carries S-diacylglycerol cysteine lipidation. Disordered stretches follow at residues 24–46 (SSAP…KPTP) and 560–585 (PSAD…VLPG).

It belongs to the LpqB lipoprotein family.

It localises to the cell membrane. The protein is Lipoprotein LpqB of Mycobacterium paratuberculosis.